The primary structure comprises 316 residues: Lipoyl synthase (316 aa).

A compositionally biased stretch (basic and acidic residues) spans 1–19 (MRDLKIPEQRHPEKAHRPD). Positions 1–31 (MRDLKIPEQRHPEKAHRPDNAQPKKPSWIRV) are disordered. Positions 55, 60, 66, 81, 85, 88, and 295 each coordinate [4Fe-4S] cluster. In terms of domain architecture, Radical SAM core spans 67 to 284 (WSQGHATMMI…EKAAYGKGFL (218 aa)).

The protein belongs to the radical SAM superfamily. Lipoyl synthase family. Requires [4Fe-4S] cluster as cofactor.

It localises to the cytoplasm. The enzyme catalyses [[Fe-S] cluster scaffold protein carrying a second [4Fe-4S](2+) cluster] + N(6)-octanoyl-L-lysyl-[protein] + 2 oxidized [2Fe-2S]-[ferredoxin] + 2 S-adenosyl-L-methionine + 4 H(+) = [[Fe-S] cluster scaffold protein] + N(6)-[(R)-dihydrolipoyl]-L-lysyl-[protein] + 4 Fe(3+) + 2 hydrogen sulfide + 2 5'-deoxyadenosine + 2 L-methionine + 2 reduced [2Fe-2S]-[ferredoxin]. It participates in protein modification; protein lipoylation via endogenous pathway; protein N(6)-(lipoyl)lysine from octanoyl-[acyl-carrier-protein]: step 2/2. Functionally, catalyzes the radical-mediated insertion of two sulfur atoms into the C-6 and C-8 positions of the octanoyl moiety bound to the lipoyl domains of lipoate-dependent enzymes, thereby converting the octanoylated domains into lipoylated derivatives. In Ruegeria sp. (strain TM1040) (Silicibacter sp.), this protein is Lipoyl synthase.